Reading from the N-terminus, the 101-residue chain is Small ribosomal subunit protein uS14A (101 aa).

Basic and acidic residues-rich tracts occupy residues 28–44 and 61–70; these read KETIRRPSSSEDERAEA and RNRDAADGRP. Residues 28-74 form a disordered region; that stretch reads KETIRRPSSSEDERAEARAALQRLPRDASPVRLRNRDAADGRPRGHL.

The protein belongs to the universal ribosomal protein uS14 family. Part of the 30S ribosomal subunit. Contacts proteins S3 and S10.

In terms of biological role, binds 16S rRNA, required for the assembly of 30S particles and may also be responsible for determining the conformation of the 16S rRNA at the A site. The polypeptide is Small ribosomal subunit protein uS14A (Rhodococcus jostii (strain RHA1)).